The chain runs to 150 residues: MKVIFLADVKGKGKKGEIKEVLTGYAQNFLIKKNLAKEATSQSIGELKGKQKAEEKAQAEILAEAQAVKAVLDEDKTRVQFQEKVGPDGRTFGSITAKKISEELQKQFGVKVDKRHIVLDHPIRAIGLIEVPVKLHKEVTAEIKLAITEA.

Belongs to the bacterial ribosomal protein bL9 family.

Its function is as follows. Binds to the 23S rRNA. The polypeptide is Large ribosomal subunit protein bL9 (Streptococcus pyogenes serotype M6 (strain ATCC BAA-946 / MGAS10394)).